The following is a 217-amino-acid chain: MGQKINPLGFRLGITQNHRSYWFANKKYSKVFEEDKKIRDCIELYVQKHIKNSSNYGGIARVEIKRKTDLIQVEIYTGFPALLVESRGQGIEQLKLNVQNILSSEDRRLRMTLIEIAKPYGEPKILAKKIALKLESRVAFRRTMKKAIELAKKGNIKGIKIQIAGRLNGAEIARVEWAREGRVPLQTIRARINYCYYAAQTIYGVLGIKVWIFQDEE.

A KH type-2 domain is found at 46-117; that stretch reads VQKHIKNSSN…RLRMTLIEIA (72 aa).

This sequence belongs to the universal ribosomal protein uS3 family. Part of the 30S ribosomal subunit.

It is found in the plastid. The protein localises to the chloroplast. This chain is Small ribosomal subunit protein uS3c (rps3), found in Marchantia polymorpha (Common liverwort).